The chain runs to 488 residues: Glutamyl-tRNA(Gln) amidotransferase subunit A (488 aa).

Active-site charge relay system residues include K77 and S152. The Acyl-ester intermediate role is filled by S176.

Belongs to the amidase family. GatA subfamily. In terms of assembly, heterotrimer of A, B and C subunits.

The enzyme catalyses L-glutamyl-tRNA(Gln) + L-glutamine + ATP + H2O = L-glutaminyl-tRNA(Gln) + L-glutamate + ADP + phosphate + H(+). In terms of biological role, allows the formation of correctly charged Gln-tRNA(Gln) through the transamidation of misacylated Glu-tRNA(Gln) in organisms which lack glutaminyl-tRNA synthetase. The reaction takes place in the presence of glutamine and ATP through an activated gamma-phospho-Glu-tRNA(Gln). This is Glutamyl-tRNA(Gln) amidotransferase subunit A from Streptococcus pneumoniae (strain JJA).